A 434-amino-acid chain; its full sequence is D-amino acid dehydrogenase (434 aa).

FAD is bound at residue 3 to 17 (VIILGGGVIGVTSAW).

The protein belongs to the DadA oxidoreductase family. Requires FAD as cofactor.

It catalyses the reaction a D-alpha-amino acid + A + H2O = a 2-oxocarboxylate + AH2 + NH4(+). Its pathway is amino-acid degradation; D-alanine degradation; NH(3) and pyruvate from D-alanine: step 1/1. Its function is as follows. Oxidative deamination of D-amino acids. This chain is D-amino acid dehydrogenase, found in Proteus mirabilis (strain HI4320).